Here is a 208-residue protein sequence, read N- to C-terminus: Recombination protein RecR (208 aa).

A C4-type zinc finger spans residues 57–72 (CALCNTLTEQEVCVTC). A Toprim domain is found at 80–187 (SKLCVVETPA…QVTRLARGVP (108 aa)).

Belongs to the RecR family.

Functionally, may play a role in DNA repair. It seems to be involved in an RecBC-independent recombinational process of DNA repair. It may act with RecF and RecO. This is Recombination protein RecR from Polaromonas naphthalenivorans (strain CJ2).